A 265-amino-acid polypeptide reads, in one-letter code: Tryptophan synthase alpha chain (265 aa).

Active-site proton acceptor residues include glutamate 49 and aspartate 60.

Belongs to the TrpA family. In terms of assembly, tetramer of two alpha and two beta chains.

The enzyme catalyses (1S,2R)-1-C-(indol-3-yl)glycerol 3-phosphate + L-serine = D-glyceraldehyde 3-phosphate + L-tryptophan + H2O. It participates in amino-acid biosynthesis; L-tryptophan biosynthesis; L-tryptophan from chorismate: step 5/5. The alpha subunit is responsible for the aldol cleavage of indoleglycerol phosphate to indole and glyceraldehyde 3-phosphate. The chain is Tryptophan synthase alpha chain from Desulfatibacillum aliphaticivorans.